Here is a 393-residue protein sequence, read N- to C-terminus: Phosphoglycerate kinase (393 aa).

Substrate contacts are provided by residues 21–23, arginine 36, 59–62, arginine 114, and arginine 147; these read DLN and HLGR. ATP is bound by residues lysine 198, glutamate 320, and 346–349; that span reads GGDT.

Belongs to the phosphoglycerate kinase family. Monomer.

Its subcellular location is the cytoplasm. It catalyses the reaction (2R)-3-phosphoglycerate + ATP = (2R)-3-phospho-glyceroyl phosphate + ADP. The protein operates within carbohydrate degradation; glycolysis; pyruvate from D-glyceraldehyde 3-phosphate: step 2/5. This is Phosphoglycerate kinase from Methylobacillus flagellatus (strain ATCC 51484 / DSM 6875 / VKM B-1610 / KT).